The primary structure comprises 338 residues: S-adenosylmethionine:tRNA ribosyltransferase-isomerase (338 aa).

The protein belongs to the QueA family. In terms of assembly, monomer.

Its subcellular location is the cytoplasm. It catalyses the reaction 7-aminomethyl-7-carbaguanosine(34) in tRNA + S-adenosyl-L-methionine = epoxyqueuosine(34) in tRNA + adenine + L-methionine + 2 H(+). The protein operates within tRNA modification; tRNA-queuosine biosynthesis. Transfers and isomerizes the ribose moiety from AdoMet to the 7-aminomethyl group of 7-deazaguanine (preQ1-tRNA) to give epoxyqueuosine (oQ-tRNA). This Francisella tularensis subsp. novicida (strain U112) protein is S-adenosylmethionine:tRNA ribosyltransferase-isomerase.